The primary structure comprises 227 residues: Ion-translocating oxidoreductase complex subunit E (227 aa).

5 helical membrane passes run 34-56 (AINA…TIIS), 68-88 (IPIY…LLHA), 91-111 (FNLY…CIIV), 127-147 (FFDG…VGSI), and 181-201 (TIIL…LIAI).

Belongs to the NqrDE/RnfAE family. The complex is composed of six subunits: RnfA, RnfB, RnfC, RnfD, RnfE and RnfG.

It is found in the cell inner membrane. Part of a membrane-bound complex that couples electron transfer with translocation of ions across the membrane. The sequence is that of Ion-translocating oxidoreductase complex subunit E from Buchnera aphidicola subsp. Acyrthosiphon pisum (strain 5A).